The chain runs to 228 residues: MIQFVLMDIEGTTTSVSFVFDVLFPYFRDNIQSIASRAEEPEIAAILKQVQDLALTETGTSLDQTGAIATLHQWSVEDRKVAPLKAMQGFLWEEGYKNGDFRGHVYPDVLPKLKEWQKEGIQLGIYSSGSVKAQKLLFGYSDYGDLTGYFDYFFDLKVGQKRDVQSYQAIAQAVQLPPEAILFLSDVPAELDAAIQAGYQAWQLVRPGTTASPTHQQVTDFGAITSLH.

It belongs to the HAD-like hydrolase superfamily. MasA/MtnC family. Monomer. Mg(2+) is required as a cofactor.

The enzyme catalyses 5-methylsulfanyl-2,3-dioxopentyl phosphate + H2O = 1,2-dihydroxy-5-(methylsulfanyl)pent-1-en-3-one + phosphate. Its pathway is amino-acid biosynthesis; L-methionine biosynthesis via salvage pathway; L-methionine from S-methyl-5-thio-alpha-D-ribose 1-phosphate: step 3/6. It functions in the pathway amino-acid biosynthesis; L-methionine biosynthesis via salvage pathway; L-methionine from S-methyl-5-thio-alpha-D-ribose 1-phosphate: step 4/6. Bifunctional enzyme that catalyzes the enolization of 2,3-diketo-5-methylthiopentyl-1-phosphate (DK-MTP-1-P) into the intermediate 2-hydroxy-3-keto-5-methylthiopentenyl-1-phosphate (HK-MTPenyl-1-P), which is then dephosphorylated to form the acireductone 1,2-dihydroxy-3-keto-5-methylthiopentene (DHK-MTPene). This is Enolase-phosphatase E1 from Picosynechococcus sp. (strain ATCC 27264 / PCC 7002 / PR-6) (Agmenellum quadruplicatum).